The chain runs to 89 residues: Small ribosomal subunit protein uS15 (89 aa).

The protein belongs to the universal ribosomal protein uS15 family. In terms of assembly, part of the 30S ribosomal subunit. Forms a bridge to the 50S subunit in the 70S ribosome, contacting the 23S rRNA.

In terms of biological role, one of the primary rRNA binding proteins, it binds directly to 16S rRNA where it helps nucleate assembly of the platform of the 30S subunit by binding and bridging several RNA helices of the 16S rRNA. Functionally, forms an intersubunit bridge (bridge B4) with the 23S rRNA of the 50S subunit in the ribosome. This Rhizobium meliloti (strain 1021) (Ensifer meliloti) protein is Small ribosomal subunit protein uS15.